Consider the following 106-residue polypeptide: COX assembly mitochondrial protein homolog (106 aa).

Ala-2 carries the post-translational modification N-acetylalanine. The CHCH domain occupies 28–71 (RERCSEQVEDFTRCCKDSGILMVLKCRKENSALKDCLTAYYNDP). Short sequence motifs (cx9C motif) lie at residues 31-41 (CSEQVEDFTRC) and 53-63 (CRKENSALKDC). Cystine bridges form between Cys-31-Cys-63 and Cys-41-Cys-53.

This sequence belongs to the CMC family. As to quaternary structure, component of the MITRAC (mitochondrial translation regulation assembly intermediate of cytochrome c oxidase complex) complex, the core components of this complex being COA3/MITRAC12 and COX14.

Its subcellular location is the mitochondrion. In terms of biological role, component of the MITRAC (mitochondrial translation regulation assembly intermediate of cytochrome c oxidase complex) complex, that regulates cytochrome c oxidase assembly. The polypeptide is COX assembly mitochondrial protein homolog (Cmc1) (Mus musculus (Mouse)).